The chain runs to 378 residues: Chaperone protein DnaJ (378 aa).

The 66-residue stretch at 5 to 70 folds into the J domain; the sequence is DYYQILGIPK…EKRTAYDQYG (66 aa). The segment at 133–211 adopts a CR-type zinc-finger fold; sequence GTTKEIRIPT…CRGQGRIKTN (79 aa). Residues cysteine 146, cysteine 149, cysteine 163, cysteine 166, cysteine 185, cysteine 188, cysteine 199, and cysteine 202 each coordinate Zn(2+). CXXCXGXG motif repeat units follow at residues 146–153, 163–170, 185–192, and 199–206; these read CKTCYGMG, CSTCHGKG, CPTCNGIG, and CRMCRGQG.

It belongs to the DnaJ family. In terms of assembly, homodimer. Requires Zn(2+) as cofactor.

It localises to the cytoplasm. Participates actively in the response to hyperosmotic and heat shock by preventing the aggregation of stress-denatured proteins and by disaggregating proteins, also in an autonomous, DnaK-independent fashion. Unfolded proteins bind initially to DnaJ; upon interaction with the DnaJ-bound protein, DnaK hydrolyzes its bound ATP, resulting in the formation of a stable complex. GrpE releases ADP from DnaK; ATP binding to DnaK triggers the release of the substrate protein, thus completing the reaction cycle. Several rounds of ATP-dependent interactions between DnaJ, DnaK and GrpE are required for fully efficient folding. Also involved, together with DnaK and GrpE, in the DNA replication of plasmids through activation of initiation proteins. The protein is Chaperone protein DnaJ of Buchnera aphidicola subsp. Schizaphis graminum (strain Sg).